The primary structure comprises 267 residues: MEKDDEVKKRDRMKVKLKVENLTKIFEFNGNRVKALDNINLEVYENEFLTVMGPSGCGKTTLLRIIAGLDYPTEGKVLLDGKEVKGPGADRGVVFQQYTLMPWRTVLKNVTFGLELKGIPKNERIEIAKKFIKMVGLEGFEDAYPYQLSGGMQQRVAIARTLANDPEIVLMDEPFAALDAQTRNILQNELLKIWQKEKKTVFFVTHSVDEAVYLSDRVVVLTARPGRIKEIVKIDLERPRDRTSIEFLEYRKKILNILKDEVLKSLK.

An ABC transporter domain is found at 17–248 (LKVENLTKIF…PRDRTSIEFL (232 aa)). 53-60 (GPSGCGKT) contributes to the ATP binding site.

The protein belongs to the ABC transporter superfamily.

This is an uncharacterized protein from Methanocaldococcus jannaschii (strain ATCC 43067 / DSM 2661 / JAL-1 / JCM 10045 / NBRC 100440) (Methanococcus jannaschii).